Consider the following 69-residue polypeptide: MIKPSLDQLMHLVDSKYTLVILAARRARDLQDGKHQMVESKSNKPVTIALEELAAGKLFFERGKPTPLG.

This sequence belongs to the RNA polymerase subunit omega family. In terms of assembly, the RNAP catalytic core consists of 2 alpha, 1 beta, 1 beta' and 1 omega subunit. When a sigma factor is associated with the core the holoenzyme is formed, which can initiate transcription.

It carries out the reaction RNA(n) + a ribonucleoside 5'-triphosphate = RNA(n+1) + diphosphate. Functionally, promotes RNA polymerase assembly. Latches the N- and C-terminal regions of the beta' subunit thereby facilitating its interaction with the beta and alpha subunits. The protein is DNA-directed RNA polymerase subunit omega of Symbiobacterium thermophilum (strain DSM 24528 / JCM 14929 / IAM 14863 / T).